A 184-amino-acid polypeptide reads, in one-letter code: Alpha-tubulin N-acetyltransferase (184 aa).

An N-acetyltransferase domain is found at 1–170 (METFNHIDIK…NHFVIFSNYF (170 aa)). Acetyl-CoA-binding positions include 104 to 117 (FYIL…GLGI) and 140 to 149 (SYKLQNFLKK).

It belongs to the acetyltransferase ATAT1 family.

The enzyme catalyses L-lysyl-[alpha-tubulin] + acetyl-CoA = N(6)-acetyl-L-lysyl-[alpha-tubulin] + CoA + H(+). In terms of biological role, specifically acetylates 'Lys-40' in alpha-tubulin on the lumenal side of microtubules. Promotes microtubule destabilization and accelerates microtubule dynamics; this activity may be independent of acetylation activity. Acetylates alpha-tubulin with a slow enzymatic rate, due to a catalytic site that is not optimized for acetyl transfer. Enters the microtubule through each end and diffuses quickly throughout the lumen of microtubules. Acetylates only long/old microtubules because of its slow acetylation rate since it does not have time to act on dynamically unstable microtubules before the enzyme is released. This Plasmodium falciparum (isolate 3D7) protein is Alpha-tubulin N-acetyltransferase.